The primary structure comprises 125 residues: Cytochrome c' (125 aa).

Heme c contacts are provided by R10, E67, C116, C119, and H120.

Homodimer. In terms of processing, binds 1 heme c group covalently per subunit.

Cytochrome c' is the most widely occurring bacterial c-type cytochrome. Cytochromes c' are high-spin proteins and the heme has no sixth ligand. Their exact function is not known. This is Cytochrome c' from Pararhodospirillum photometricum (Rhodospirillum photometricum).